The following is a 316-amino-acid chain: Olfactory receptor 2G6 (316 aa).

Over 1-25 the chain is Extracellular; the sequence is MEETNNSSEKGFLLLGFSDQPQLER. 2 N-linked (GlcNAc...) asparagine glycosylation sites follow: N5 and N6. Residues 26 to 49 traverse the membrane as a helical segment; that stretch reads FLFAIILYFYVLSLLGNTALILVC. Residues 50–57 are Cytoplasmic-facing; it reads CLDSRLHT. A helical transmembrane segment spans residues 58–79; the sequence is PMYFFLSNLSCVDICFTTSVAP. Over 80–100 the chain is Extracellular; that stretch reads QLLVTMNKKDKTMSYGGCVAQ. The cysteines at positions 97 and 189 are disulfide-linked. The helical transmembrane segment at 101-120 threads the bilayer; sequence LYVAMGLGSSECILLAVMAY. Over 121-139 the chain is Cytoplasmic; the sequence is DRYAAVCRPLRYIAIMHPR. The chain crosses the membrane as a helical span at residues 140–158; it reads FCASLAGGAWLSGLITSLI. At 159–195 the chain is on the extracellular side; that stretch reads QCSLTVQLPLCGHRTLDHIFCEVPVLIKLACVDTTFN. A helical membrane pass occupies residues 196-219; it reads EAELFVASVVFLIVPVLLILVSYG. Residues 220 to 236 lie on the Cytoplasmic side of the membrane; that stretch reads FITQAVLRIKSAAGRQK. The helical transmembrane segment at 237–259 threads the bilayer; that stretch reads AFGTCSSHLVVVIIFYGTIIFMY. The Extracellular segment spans residues 260–272; the sequence is LQPANRRSKNQGK. The chain crosses the membrane as a helical span at residues 273–292; sequence FVSLFYTIVTPLLNPIIYTL. Residues 293–316 lie on the Cytoplasmic side of the membrane; sequence RNKDVKGALRTLILGSAAGQSHKD.

It belongs to the G-protein coupled receptor 1 family.

The protein localises to the cell membrane. In terms of biological role, odorant receptor. The polypeptide is Olfactory receptor 2G6 (OR2G6) (Homo sapiens (Human)).